The following is a 517-amino-acid chain: Fatty acyl-CoA reductase wat (517 aa).

Helical transmembrane passes span 378–398 (ILCF…MVII) and 492–512 (VLHY…LYAL).

It belongs to the fatty acyl-CoA reductase family.

The protein localises to the apical cell membrane. It catalyses the reaction a long-chain fatty acyl-CoA + 2 NADPH + 2 H(+) = a long-chain primary fatty alcohol + 2 NADP(+) + CoA. Functionally, catalyzes the reduction of saturated fatty acyl-CoA to fatty alcohols. The preferred substrates are C24:0 and C26:0. Necessary for the final stages of tracheal maturation, to facilitate the transition from water-filled to gas-filled tubes. May help to maintain the integrity of the outer hydrophobic envelope of the trachea. This chain is Fatty acyl-CoA reductase wat, found in Drosophila melanogaster (Fruit fly).